Consider the following 275-residue polypeptide: MKLKGEAVLITGGASGLGRALVDRFVAEAKVAVLDKSAERLAELETDLGDNVLGIVGDVRSLEDQKQAASRCVARFGKIDTLIPNAGIWDYSTALVDLPEESLDAAFDEVFHINVKGYIHAVKALPALVASRGNVIFTISNAGFYPNGGGPLYTAAKQAIVGLVRELAFELAPYVRVNGVGPGGMNSDMRGPSSLGMGSKAISTVPLADMLKSVLPIGRMPEVEEYTGAYVFFATRGDAAPASGALVNYDGGLGVRGFFSGAGGNDLLEQLNIHP.

9 to 33 (LITGGASGLGRALVDRFVAEAKVAV) is an NAD(+) binding site. Ser140 provides a ligand contact to substrate. Tyr153 acts as the Proton acceptor in catalysis.

Belongs to the short-chain dehydrogenases/reductases (SDR) family.

It carries out the reaction (2R,3S)-3-phenylcyclohexa-3,5-diene-1,2-diol + NAD(+) = biphenyl-2,3-diol + NADH + H(+). The protein operates within xenobiotic degradation; biphenyl degradation; 2-hydroxy-2,4-pentadienoate and benzoate from biphenyl: step 2/4. This Metapseudomonas furukawaii (Pseudomonas furukawaii) protein is Cis-2,3-dihydrobiphenyl-2,3-diol dehydrogenase (bphB).